The sequence spans 380 residues: Cytochrome b (380 aa).

Helical transmembrane passes span 33 to 53, 77 to 98, 113 to 133, and 178 to 198; these read FGSLLGICLMVQIITGLFLAM, WLIRYAHANGASMFFICLFIHV, WNIGIILLLTTMATAFVGYVL, and FFAFHFILPFIITALVLVHLL. Residues H83 and H97 each coordinate heme b. Positions 182 and 196 each coordinate heme b. H201 is an a ubiquinone binding site. The next 4 helical transmembrane spans lie at 226–246, 288–308, 320–340, and 347–367; these read IKDILGVLLLLMVLMFLVLFF, LGGVLALLLSILILAAFPLLN, ITQTLYWIFVANLLILTWIGG, and FTTIGQISSIMYFMIIVIFMP.

This sequence belongs to the cytochrome b family. As to quaternary structure, the cytochrome bc1 complex contains 11 subunits: 3 respiratory subunits (MT-CYB, CYC1 and UQCRFS1), 2 core proteins (UQCRC1 and UQCRC2) and 6 low-molecular weight proteins (UQCRH/QCR6, UQCRB/QCR7, UQCRQ/QCR8, UQCR10/QCR9, UQCR11/QCR10 and a cleavage product of UQCRFS1). This cytochrome bc1 complex then forms a dimer. Heme b is required as a cofactor.

The protein resides in the mitochondrion inner membrane. In terms of biological role, component of the ubiquinol-cytochrome c reductase complex (complex III or cytochrome b-c1 complex) that is part of the mitochondrial respiratory chain. The b-c1 complex mediates electron transfer from ubiquinol to cytochrome c. Contributes to the generation of a proton gradient across the mitochondrial membrane that is then used for ATP synthesis. The protein is Cytochrome b (MT-CYB) of Microryzomys minutus (Forest small rice rat).